Reading from the N-terminus, the 158-residue chain is Small ribosomal subunit protein uS7 (158 aa).

It belongs to the universal ribosomal protein uS7 family. Part of the 30S ribosomal subunit. Contacts proteins S9 and S11.

In terms of biological role, one of the primary rRNA binding proteins, it binds directly to 16S rRNA where it nucleates assembly of the head domain of the 30S subunit. Is located at the subunit interface close to the decoding center, probably blocks exit of the E-site tRNA. The chain is Small ribosomal subunit protein uS7 from Gluconacetobacter diazotrophicus (strain ATCC 49037 / DSM 5601 / CCUG 37298 / CIP 103539 / LMG 7603 / PAl5).